The following is a 711-amino-acid chain: C6 finger domain transcription factor nscR (711 aa).

The zn(2)-C6 fungal-type DNA-binding region spans 17 to 43 (CELCRERKVKCDKLDPCTNCSSAGVIC). The tract at residues 372–394 (SPPKHINDSDFDPTTSHDVPDRE) is disordered.

Its subcellular location is the nucleus. In terms of biological role, transcription factor that specifically regulates the neosartoricin B biosynthesis gene cluster. This chain is C6 finger domain transcription factor nscR, found in Trichophyton tonsurans (strain CBS 112818) (Scalp ringworm fungus).